The chain runs to 201 residues: Ubiquitin-conjugating enzyme E2 E2 (201 aa).

A compositionally biased stretch (basic and acidic residues) spans 1-10; that stretch reads MSTEAQRVDD. The tract at residues 1–55 is disordered; the sequence is MSTEAQRVDDSPSTSGGSSDGDQRESVQQEPDREQVQPKKKEGKISSKTAAKLST. N-acetylserine is present on serine 2. 4 positions are modified to phosphoserine: serine 11, serine 15, serine 18, and serine 19. The span at 21 to 45 shows a compositional bias: basic and acidic residues; that stretch reads GDQRESVQQEPDREQVQPKKKEGKI. The span at 46–55 shows a compositional bias: low complexity; the sequence is SSKTAAKLST. Residues 55–201 form the UBC core domain; sequence TSAKRIQKEL…ARQWTKRYAT (147 aa). Residue cysteine 139 is the Glycyl thioester intermediate of the active site.

The protein belongs to the ubiquitin-conjugating enzyme family. Post-translationally, autoubiquitinated.

The enzyme catalyses S-ubiquitinyl-[E1 ubiquitin-activating enzyme]-L-cysteine + [E2 ubiquitin-conjugating enzyme]-L-cysteine = [E1 ubiquitin-activating enzyme]-L-cysteine + S-ubiquitinyl-[E2 ubiquitin-conjugating enzyme]-L-cysteine.. It participates in protein modification; protein ubiquitination. Accepts ubiquitin from the E1 complex and catalyzes its covalent attachment to other proteins. In vitro catalyzes 'Lys-11'- and 'Lys-48'-, as well as 'Lys-63'-linked polyubiquitination. Catalyzes the ISGylation of influenza A virus NS1 protein. This is Ubiquitin-conjugating enzyme E2 E2 (Ube2e2) from Mus musculus (Mouse).